The primary structure comprises 634 residues: 1-deoxy-D-xylulose-5-phosphate synthase (634 aa).

Residues His-74 and 115-117 contribute to the thiamine diphosphate site; that span reads AHS. Asp-146 is a binding site for Mg(2+). Residues 147-148, Asn-176, Tyr-283, and Glu-365 contribute to the thiamine diphosphate site; that span reads GA. Mg(2+) is bound at residue Asn-176.

It belongs to the transketolase family. DXPS subfamily. Homodimer. Requires Mg(2+) as cofactor. Thiamine diphosphate serves as cofactor.

It catalyses the reaction D-glyceraldehyde 3-phosphate + pyruvate + H(+) = 1-deoxy-D-xylulose 5-phosphate + CO2. The protein operates within metabolic intermediate biosynthesis; 1-deoxy-D-xylulose 5-phosphate biosynthesis; 1-deoxy-D-xylulose 5-phosphate from D-glyceraldehyde 3-phosphate and pyruvate: step 1/1. Catalyzes the acyloin condensation reaction between C atoms 2 and 3 of pyruvate and glyceraldehyde 3-phosphate to yield 1-deoxy-D-xylulose-5-phosphate (DXP). In Burkholderia cenocepacia (strain ATCC BAA-245 / DSM 16553 / LMG 16656 / NCTC 13227 / J2315 / CF5610) (Burkholderia cepacia (strain J2315)), this protein is 1-deoxy-D-xylulose-5-phosphate synthase.